A 193-amino-acid chain; its full sequence is Adenylate kinase (193 aa).

ATP is bound at residue 11–16 (GAGKGT). An NMP region spans residues 31–60 (STGDLLRAEVKAQTPLGCQAKVYMDAGELV). Residues Thr-32, Arg-37, 58 to 60 (ELV), 85 to 88 (GFPR), and Gln-92 each bind AMP. The segment at 126-136 (ARGKEQGRSDD) is LID. Arg-127 is a binding site for ATP. AMP is bound by residues Arg-133 and Arg-145. An ATP-binding site is contributed by Gln-173.

It belongs to the adenylate kinase family. As to quaternary structure, monomer.

The protein resides in the cytoplasm. The enzyme catalyses AMP + ATP = 2 ADP. The protein operates within purine metabolism; AMP biosynthesis via salvage pathway; AMP from ADP: step 1/1. Its function is as follows. Catalyzes the reversible transfer of the terminal phosphate group between ATP and AMP. Plays an important role in cellular energy homeostasis and in adenine nucleotide metabolism. The polypeptide is Adenylate kinase (Synechococcus sp. (strain JA-2-3B'a(2-13)) (Cyanobacteria bacterium Yellowstone B-Prime)).